The following is a 541-amino-acid chain: MDSKRSLLFMALLFISFLIYQQWQVDYNTPKPEMTEQAQVSEVNSTALTATSDIANDTQAKGRVITLENDVFRLKVNTLGGDVIGSELLNYDAELHSSAPFVLLQNNADKVYIAQSGLVGKNGIDSRAGRANYQVEGDVFKLAEGQQELKVPLVFEKDGVIYRKVFVLKPGSYALEVNFEITNQSPKPIEVVPYAQLTHTLVESSGSMAMPTYTGGAYSSSETNYKKYSFEDMEKADLDIHTKAGWVALLQHYFVSAWIPNQDANNTLYTLTNTKKHLGSIGYRSAPIVIENGATETIHTQLWTGPKLQDQMADVANHLDLTVDYGWAWFIAKPLFKLLTLIQSLVQNWGLAIIGVTLVVKAILYPLTKAQYTSMAKMRMLQPKLQEMRERFGEDRQRMSQEMMKLYKEEKVNPLGGCLPILLQMPIFIALYWTFMEAVELRHAPFFGWVQDLSAQDPYFILPILMGASMFLLQKMSPTPVADPMQQKVMTFMPLIFMVFFLFFPAGLVLYWLASNLITIAQQWLIYRGLEKKGLHTRVKK.

5 consecutive transmembrane segments (helical) span residues 7-27 (LLFM…QVDY), 345-365 (LVQN…AILY), 415-435 (LGGC…YWTF), 453-473 (LSAQ…MFLL), and 492-512 (FMPL…VLYW).

This sequence belongs to the OXA1/ALB3/YidC family. Type 1 subfamily. Interacts with the Sec translocase complex via SecD. Specifically interacts with transmembrane segments of nascent integral membrane proteins during membrane integration.

It is found in the cell inner membrane. In terms of biological role, required for the insertion and/or proper folding and/or complex formation of integral membrane proteins into the membrane. Involved in integration of membrane proteins that insert both dependently and independently of the Sec translocase complex, as well as at least some lipoproteins. Aids folding of multispanning membrane proteins. This Histophilus somni (strain 129Pt) (Haemophilus somnus) protein is Membrane protein insertase YidC.